A 289-amino-acid polypeptide reads, in one-letter code: 4-diphosphocytidyl-2-C-methyl-D-erythritol kinase (289 aa).

The active site involves lysine 10. 94-104 (PVAAGLAGGSS) is a binding site for ATP. Residue aspartate 136 is part of the active site.

Belongs to the GHMP kinase family. IspE subfamily.

It catalyses the reaction 4-CDP-2-C-methyl-D-erythritol + ATP = 4-CDP-2-C-methyl-D-erythritol 2-phosphate + ADP + H(+). The protein operates within isoprenoid biosynthesis; isopentenyl diphosphate biosynthesis via DXP pathway; isopentenyl diphosphate from 1-deoxy-D-xylulose 5-phosphate: step 3/6. Functionally, catalyzes the phosphorylation of the position 2 hydroxy group of 4-diphosphocytidyl-2C-methyl-D-erythritol. This Bacillus cytotoxicus (strain DSM 22905 / CIP 110041 / 391-98 / NVH 391-98) protein is 4-diphosphocytidyl-2-C-methyl-D-erythritol kinase.